The following is a 123-amino-acid chain: Small ribosomal subunit protein uS12 (123 aa).

Asp89 carries the 3-methylthioaspartic acid modification.

Belongs to the universal ribosomal protein uS12 family. In terms of assembly, part of the 30S ribosomal subunit. Contacts proteins S8 and S17. May interact with IF1 in the 30S initiation complex.

With S4 and S5 plays an important role in translational accuracy. In terms of biological role, interacts with and stabilizes bases of the 16S rRNA that are involved in tRNA selection in the A site and with the mRNA backbone. Located at the interface of the 30S and 50S subunits, it traverses the body of the 30S subunit contacting proteins on the other side and probably holding the rRNA structure together. The combined cluster of proteins S8, S12 and S17 appears to hold together the shoulder and platform of the 30S subunit. This is Small ribosomal subunit protein uS12 from Methylobacterium radiotolerans (strain ATCC 27329 / DSM 1819 / JCM 2831 / NBRC 15690 / NCIMB 10815 / 0-1).